The primary structure comprises 385 residues: MAKIYFIAGEMSGDFIGGRIIQHLKNNTGVQFVGVGSKYMEEAGSFKSLFPISAINLIGFVEILPHILKLKKLIDKTVEDIINSKADLLITIDSPGFTYRVAKQVRKLLPKLKMIHIVAPSVWAYKEGRAIKYAKIYDCLFAVLPFESPYFTKVGLDCRYIGHPIMEQEFYSDKIALRKEFKIDENEKVLCVTLGSRRGEILRHLPVFIASIEEIFESCKNLKVIFTLVNPANEVIIKPFLENVKFNYLFSSERLKTYALSDLALAKSGTNTLEIAASGTPMIVAYKVNILSFLIIRALIKIKYVTLINIIAGSEIIPEFIQHNCRATLISNKLQELLFSSKKAYKQVIESQKILQKLRFKSNQLPSYIAAEIIKQEFLEPKIKL.

Belongs to the LpxB family.

It catalyses the reaction a lipid X + a UDP-2-N,3-O-bis[(3R)-3-hydroxyacyl]-alpha-D-glucosamine = a lipid A disaccharide + UDP + H(+). It functions in the pathway bacterial outer membrane biogenesis; LPS lipid A biosynthesis. Its function is as follows. Condensation of UDP-2,3-diacylglucosamine and 2,3-diacylglucosamine-1-phosphate to form lipid A disaccharide, a precursor of lipid A, a phosphorylated glycolipid that anchors the lipopolysaccharide to the outer membrane of the cell. This Rickettsia canadensis (strain McKiel) protein is Lipid-A-disaccharide synthase.